A 1224-amino-acid polypeptide reads, in one-letter code: ATP-dependent helicase/deoxyribonuclease subunit B (1224 aa).

The UvrD-like helicase ATP-binding domain occupies 1–326; the sequence is MSLRFILGRA…VCAAANRRSE (326 aa). 8-15 is a binding site for ATP; sequence GRAGTGKS. Positions 283 to 584 constitute a UvrD-like helicase C-terminal domain; it reads QSAPRFQHPE…KLSLIPPELD (302 aa). 4 residues coordinate [4Fe-4S] cluster: cysteine 841, cysteine 1176, cysteine 1179, and cysteine 1185.

This sequence belongs to the helicase family. AddB/RexB type 1 subfamily. Heterodimer of AddA and AddB. The cofactor is Mg(2+). [4Fe-4S] cluster is required as a cofactor.

Its function is as follows. The heterodimer acts as both an ATP-dependent DNA helicase and an ATP-dependent, dual-direction single-stranded exonuclease. Recognizes the chi site generating a DNA molecule suitable for the initiation of homologous recombination. The AddB subunit has 5' -&gt; 3' nuclease activity but not helicase activity. This is ATP-dependent helicase/deoxyribonuclease subunit B from Heliobacterium modesticaldum (strain ATCC 51547 / Ice1).